The following is a 55-amino-acid chain: Conotoxin Cal22c (55 aa).

Residues 1 to 5 (GRPSA) constitute a propeptide that is removed on maturation.

Post-translationally, contains 4 disulfide bonds. Expressed by the venom duct.

It is found in the secreted. Probable neurotoxin with unknown target. Possibly targets ion channels. This is Conotoxin Cal22c from Californiconus californicus (California cone).